We begin with the raw amino-acid sequence, 370 residues long: NAD-dependent histone deacetylase HST4 (370 aa).

A disordered region spans residues 1–27 (MKQKFVLPITPPSTAEKKPQTENRCNE). Residues 15-27 (AEKKPQTENRCNE) show a composition bias toward basic and acidic residues. One can recognise a Deacetylase sirtuin-type domain in the interval 75 to 370 (RHHMDRDAGF…GDCQHVTSLL (296 aa)). NAD(+)-binding positions include 100 to 119 (GAGISVAAGIPDFRSSEGIF) and 184 to 187 (QNID). Residue His213 is the Proton acceptor of the active site. Residues Cys221, Cys224, Cys251, and Cys254 each contribute to the Zn(2+) site. NAD(+) is bound by residues 310–312 (GTS), 340–342 (NTS), and Cys363.

This sequence belongs to the sirtuin family. Class I subfamily. Zn(2+) serves as cofactor.

It localises to the nucleus. The enzyme catalyses N(6)-acetyl-L-lysyl-[protein] + NAD(+) + H2O = 2''-O-acetyl-ADP-D-ribose + nicotinamide + L-lysyl-[protein]. In terms of biological role, NAD-dependent histone deacetylase, which contributes together with HST3 to histone H3 'Lys-56' deacetylation, regulation of telomeric silencing, proper cell cycle progression, DNA damage control, DNA recombination, and genomic maintenance. The polypeptide is NAD-dependent histone deacetylase HST4 (HST4) (Saccharomyces cerevisiae (strain ATCC 204508 / S288c) (Baker's yeast)).